The sequence spans 508 residues: Flavonoid 3'-monooxygenase CYP75B137 (508 aa).

A helical transmembrane segment spans residues 2–22; that stretch reads LTFFFLWISTLLLSSFIVYLL. Cys445 serves as a coordination point for heme.

It belongs to the cytochrome P450 family. Heme is required as a cofactor. As to expression, expressed in young cromes.

It is found in the membrane. It carries out the reaction a 3'-unsubstituted flavone + reduced [NADPH--hemoprotein reductase] + O2 = a 3'-hydroxyflavone + oxidized [NADPH--hemoprotein reductase] + H2O + H(+). The enzyme catalyses (2S)-naringenin + reduced [NADPH--hemoprotein reductase] + O2 = (S)-eriodictyol + oxidized [NADPH--hemoprotein reductase] + H2O + H(+). It catalyses the reaction (2R,3R)-dihydrokaempferol + reduced [NADPH--hemoprotein reductase] + O2 = (2R,3R)-dihydroquercetin + oxidized [NADPH--hemoprotein reductase] + H2O + H(+). The catalysed reaction is kaempferol + reduced [NADPH--hemoprotein reductase] + O2 = quercetin + oxidized [NADPH--hemoprotein reductase] + H2O + H(+). The protein operates within flavonoid metabolism. In terms of biological role, flavonoid 3'-hydroxylase that catalyzes the 3'-hydroxylation of flavanones, dihydroflavonols and flavonols. Converts narigenin to eriodictyol, dihydrokaempferol to dihydroquercetin and kaempferol to quercetin. This is Flavonoid 3'-monooxygenase CYP75B137 from Crocosmia x crocosmiiflora (Montbretia).